Reading from the N-terminus, the 98-residue chain is Defensin-like protein 68 (98 aa).

The N-terminal stretch at 1–19 is a signal peptide; it reads MGSSKLLVALTLVVMITIS. 4 disulfides stabilise this stretch: Cys-38/Cys-88, Cys-42/Cys-65, Cys-51/Cys-86, and Cys-55/Cys-87.

It belongs to the DEFL family.

It localises to the secreted. The polypeptide is Defensin-like protein 68 (Arabidopsis thaliana (Mouse-ear cress)).